Reading from the N-terminus, the 311-residue chain is Methionyl-tRNA formyltransferase (311 aa).

110 to 113 provides a ligand contact to (6S)-5,6,7,8-tetrahydrofolate; it reads SLLP.

The protein belongs to the Fmt family.

It catalyses the reaction L-methionyl-tRNA(fMet) + (6R)-10-formyltetrahydrofolate = N-formyl-L-methionyl-tRNA(fMet) + (6S)-5,6,7,8-tetrahydrofolate + H(+). In terms of biological role, attaches a formyl group to the free amino group of methionyl-tRNA(fMet). The formyl group appears to play a dual role in the initiator identity of N-formylmethionyl-tRNA by promoting its recognition by IF2 and preventing the misappropriation of this tRNA by the elongation apparatus. The polypeptide is Methionyl-tRNA formyltransferase (Streptococcus pyogenes serotype M28 (strain MGAS6180)).